The following is a 357-amino-acid chain: DNA integrity scanning protein DisA (357 aa).

Positions 8-146 (VKSMINILQL…GNLRYTLKDI (139 aa)) constitute a DAC domain. ATP is bound by residues G75, L93, and 106–110 (MRHRT).

This sequence belongs to the DisA family. In terms of assembly, homooctamer. Mg(2+) is required as a cofactor.

The catalysed reaction is 2 ATP = 3',3'-c-di-AMP + 2 diphosphate. Its function is as follows. Participates in a DNA-damage check-point that is active prior to asymmetric division when DNA is damaged. DisA forms globular foci that rapidly scan along the chromosomes during sporulation, searching for lesions. When a lesion is present, DisA pauses at the lesion site. This triggers a cellular response that culminates in a temporary block in sporulation initiation. In terms of biological role, also has diadenylate cyclase activity, catalyzing the condensation of 2 ATP molecules into cyclic di-AMP (c-di-AMP). c-di-AMP acts as a signaling molecule that couples DNA integrity with progression of sporulation. The rise in c-di-AMP level generated by DisA while scanning the chromosome, operates as a positive signal that advances sporulation; upon encountering a lesion, the DisA focus arrests at the damaged site and halts c-di-AMP synthesis. The sequence is that of DNA integrity scanning protein DisA from Bacillus cereus (strain G9842).